Here is a 428-residue protein sequence, read N- to C-terminus: Anaerobic glycerol-3-phosphate dehydrogenase subunit B (428 aa).

This sequence belongs to the anaerobic G-3-P dehydrogenase subunit B family. As to quaternary structure, composed of a catalytic GlpA/B dimer and of membrane bound GlpC. The cofactor is FMN.

It catalyses the reaction a quinone + sn-glycerol 3-phosphate = dihydroxyacetone phosphate + a quinol. It participates in polyol metabolism; glycerol degradation via glycerol kinase pathway; glycerone phosphate from sn-glycerol 3-phosphate (anaerobic route): step 1/1. Conversion of glycerol 3-phosphate to dihydroxyacetone. Uses fumarate or nitrate as electron acceptor. This is Anaerobic glycerol-3-phosphate dehydrogenase subunit B from Actinobacillus pleuropneumoniae serotype 5b (strain L20).